The chain runs to 507 residues: Maturase K (507 aa).

The protein belongs to the intron maturase 2 family. MatK subfamily.

The protein resides in the plastid. It is found in the chloroplast. In terms of biological role, usually encoded in the trnK tRNA gene intron. Probably assists in splicing its own and other chloroplast group II introns. The chain is Maturase K from Ranunculus repens (Creeping buttercup).